The following is a 288-amino-acid chain: Acetyl-coenzyme A carboxylase carboxyl transferase subunit beta (288 aa).

Residues 32–288 enclose the CoA carboxyltransferase N-terminal domain; that stretch reads MWAKCPSCKR…LRLHSLEGWR (257 aa). 4 residues coordinate Zn(2+): Cys36, Cys39, Cys54, and Cys57. The segment at 36-57 adopts a C4-type zinc-finger fold; sequence CPSCKRTLYTKEMGAEKICPHC.

It belongs to the AccD/PCCB family. In terms of assembly, acetyl-CoA carboxylase is a heterohexamer composed of biotin carboxyl carrier protein (AccB), biotin carboxylase (AccC) and two subunits each of ACCase subunit alpha (AccA) and ACCase subunit beta (AccD). It depends on Zn(2+) as a cofactor.

It is found in the cytoplasm. It catalyses the reaction N(6)-carboxybiotinyl-L-lysyl-[protein] + acetyl-CoA = N(6)-biotinyl-L-lysyl-[protein] + malonyl-CoA. It functions in the pathway lipid metabolism; malonyl-CoA biosynthesis; malonyl-CoA from acetyl-CoA: step 1/1. In terms of biological role, component of the acetyl coenzyme A carboxylase (ACC) complex. Biotin carboxylase (BC) catalyzes the carboxylation of biotin on its carrier protein (BCCP) and then the CO(2) group is transferred by the transcarboxylase to acetyl-CoA to form malonyl-CoA. This chain is Acetyl-coenzyme A carboxylase carboxyl transferase subunit beta, found in Enterococcus faecalis (strain ATCC 700802 / V583).